Consider the following 92-residue polypeptide: Small ribosomal subunit protein uS19 (92 aa).

Belongs to the universal ribosomal protein uS19 family.

Functionally, protein S19 forms a complex with S13 that binds strongly to the 16S ribosomal RNA. The sequence is that of Small ribosomal subunit protein uS19 from Ruegeria pomeroyi (strain ATCC 700808 / DSM 15171 / DSS-3) (Silicibacter pomeroyi).